Here is a 76-residue protein sequence, read N- to C-terminus: Large ribosomal subunit protein bL31 (76 aa).

It belongs to the bacterial ribosomal protein bL31 family. Type A subfamily. As to quaternary structure, part of the 50S ribosomal subunit.

Its function is as follows. Binds the 23S rRNA. The polypeptide is Large ribosomal subunit protein bL31 (Beijerinckia indica subsp. indica (strain ATCC 9039 / DSM 1715 / NCIMB 8712)).